The sequence spans 388 residues: P2X purinoceptor 4 (388 aa).

At Met1 to Arg33 the chain is on the cytoplasmic side. A helical transmembrane segment spans residues Val34–Tyr54. Topologically, residues Gln55 to Asn338 are extracellular. ATP contacts are provided by Lys67 and Lys69. Residues Lys67 and Lys69 each contribute to the CTP site. N-linked (GlcNAc...) asparagine glycosylation is found at Asn75, Asn110, Asn131, Asn153, and Asn184. Intrachain disulfides connect Cys116–Cys165, Cys126–Cys149, and Cys132–Cys159. Thr186 and Leu188 together coordinate ATP. Thr186 serves as a coordination point for CTP. Asn199 and Asn208 each carry an N-linked (GlcNAc...) asparagine glycan. 2 cysteine pairs are disulfide-bonded: Cys217-Cys227 and Cys261-Cys270. ATP contacts are provided by Asn293, Arg295, and Lys313. CTP-binding residues include Asn293, Arg295, and Lys313. A helical transmembrane segment spans residues Val339–Tyr359. At Cys360 to Gln388 the chain is on the cytoplasmic side.

The protein belongs to the P2X receptor family. As to quaternary structure, functional P2RXs are organized as homomeric and heteromeric trimers. Functional P2XRs are organized as homomeric and heteromeric trimers. Forms heterotrimer with P2RX1. Interacts with P2RX7 (via C-terminus); this interaction is functional only in the presence of ATP. Forms heterotrimer with P2RX4; functional differences between homomeric P2RX4 and P2RX4/6 heterotrimer are minor. Interacts with AP1M2.

Its subcellular location is the cell membrane. The protein localises to the lysosome membrane. The catalysed reaction is K(+)(in) = K(+)(out). The enzyme catalyses Na(+)(in) = Na(+)(out). It catalyses the reaction Ca(2+)(in) = Ca(2+)(out). Its activity is regulated as follows. Activated by ATP. pH-dependent and inhibited by acidic pH. Functionally, ATP-gated nonselective transmembrane cation channel permeable to potassium, sodium and calcium. CTP, but not GTP or UTP, functions as a weak affinity agonist for P2RX4. Activated by extracellularly released ATP, it plays multiple role in immunity and central nervous system physiology. Plays a key role in initial steps of T-cell activation and Ca(2+) microdomain formation. Also participates in basal T-cell activity without TCR/CD3 stimulation. Promotes the differentiation and activation of Th17 cells via expression of retinoic acid-related orphan receptor C/RORC. Upon activation, drives microglia motility via the PI3K/Akt pathway. Could also function as an ATP-gated cation channel of lysosomal membranes. The protein is P2X purinoceptor 4 (P2rx4) of Mus musculus (Mouse).